The primary structure comprises 314 residues: MLDFEKPLFEIKNKIESLKESQEKNDVDLQEEIDMLEASLARETEKVYTNLKPWDRVQLARLQERPTSLDYIPHIFDSFIELHGDRNYRDDPAMIGGIGYLNGQAVTVVGQQRGKDTKDNIYRNFGMAHPEGYRKALRLMKQAEKFNRPIFSFIDTKGAYPGKAAEERGQSESIARNLVEMASLTVPVISIVIGEGGSGGALGLGITNRILMLENSTYSVISPEGASALLWKDSNLAKIAAETMKITAEDLYELNIADEVIKEPLGGAHHDVETQAQSIKRTFESHLSELNQLTQEELVEDRYQKFRTIGSYTE.

Positions 32-289 (EIDMLEASLA…KRTFESHLSE (258 aa)) constitute a CoA carboxyltransferase C-terminal domain.

It belongs to the AccA family. Acetyl-CoA carboxylase is a heterohexamer composed of biotin carboxyl carrier protein (AccB), biotin carboxylase (AccC) and two subunits each of ACCase subunit alpha (AccA) and ACCase subunit beta (AccD).

The protein resides in the cytoplasm. The enzyme catalyses N(6)-carboxybiotinyl-L-lysyl-[protein] + acetyl-CoA = N(6)-biotinyl-L-lysyl-[protein] + malonyl-CoA. It participates in lipid metabolism; malonyl-CoA biosynthesis; malonyl-CoA from acetyl-CoA: step 1/1. In terms of biological role, component of the acetyl coenzyme A carboxylase (ACC) complex. First, biotin carboxylase catalyzes the carboxylation of biotin on its carrier protein (BCCP) and then the CO(2) group is transferred by the carboxyltransferase to acetyl-CoA to form malonyl-CoA. The chain is Acetyl-coenzyme A carboxylase carboxyl transferase subunit alpha from Staphylococcus saprophyticus subsp. saprophyticus (strain ATCC 15305 / DSM 20229 / NCIMB 8711 / NCTC 7292 / S-41).